A 65-amino-acid chain; its full sequence is UPF0337 protein gbs1203 (65 aa).

A compositionally biased stretch (basic and acidic residues) spans 1–12 (MSEEKFDAKVDK). Residues 1-29 (MSEEKFDAKVDKVSGSVKESVGKLTGDKE) form a disordered region.

The protein belongs to the UPF0337 (CsbD) family.

The protein is UPF0337 protein gbs1203 of Streptococcus agalactiae serotype III (strain NEM316).